A 433-amino-acid chain; its full sequence is Signal recognition particle 54 kDa protein (433 aa).

GTP contacts are provided by residues 100 to 107 (GLQGSGKT), 180 to 184 (DTAGR), and 238 to 241 (TKFD).

Belongs to the GTP-binding SRP family. SRP54 subfamily. Part of the signal recognition particle protein translocation system, which is composed of SRP and FtsY. Archaeal SRP consists of a 7S RNA molecule of 300 nucleotides and two protein subunits: SRP54 and SRP19.

The protein localises to the cytoplasm. The catalysed reaction is GTP + H2O = GDP + phosphate + H(+). Involved in targeting and insertion of nascent membrane proteins into the cytoplasmic membrane. Binds to the hydrophobic signal sequence of the ribosome-nascent chain (RNC) as it emerges from the ribosomes. The SRP-RNC complex is then targeted to the cytoplasmic membrane where it interacts with the SRP receptor FtsY. In Archaeoglobus fulgidus (strain ATCC 49558 / DSM 4304 / JCM 9628 / NBRC 100126 / VC-16), this protein is Signal recognition particle 54 kDa protein.